The primary structure comprises 887 residues: Alanine--tRNA ligase (887 aa).

Zn(2+) is bound by residues H564, H568, C676, and H680.

The protein belongs to the class-II aminoacyl-tRNA synthetase family. Requires Zn(2+) as cofactor.

It is found in the cytoplasm. The enzyme catalyses tRNA(Ala) + L-alanine + ATP = L-alanyl-tRNA(Ala) + AMP + diphosphate. Catalyzes the attachment of alanine to tRNA(Ala) in a two-step reaction: alanine is first activated by ATP to form Ala-AMP and then transferred to the acceptor end of tRNA(Ala). Also edits incorrectly charged Ser-tRNA(Ala) and Gly-tRNA(Ala) via its editing domain. This chain is Alanine--tRNA ligase, found in Sinorhizobium medicae (strain WSM419) (Ensifer medicae).